The chain runs to 124 residues: Large ribosomal subunit protein bL12 (124 aa).

Belongs to the bacterial ribosomal protein bL12 family. Homodimer. Part of the ribosomal stalk of the 50S ribosomal subunit. Forms a multimeric L10(L12)X complex, where L10 forms an elongated spine to which 2 to 4 L12 dimers bind in a sequential fashion. Binds GTP-bound translation factors.

Forms part of the ribosomal stalk which helps the ribosome interact with GTP-bound translation factors. Is thus essential for accurate translation. In Vesicomyosocius okutanii subsp. Calyptogena okutanii (strain HA), this protein is Large ribosomal subunit protein bL12.